A 503-amino-acid polypeptide reads, in one-letter code: Cytochrome P450 3A15 (503 aa).

Cys-442 contributes to the heme binding site.

It belongs to the cytochrome P450 family. The cofactor is heme.

The protein localises to the endoplasmic reticulum membrane. It is found in the microsome membrane. It carries out the reaction an organic molecule + reduced [NADPH--hemoprotein reductase] + O2 = an alcohol + oxidized [NADPH--hemoprotein reductase] + H2O + H(+). Functionally, cytochromes P450 are a group of heme-thiolate monooxygenases. In liver microsomes, this enzyme is involved in an NADPH-dependent electron transport pathway. It oxidizes a variety of structurally unrelated compounds, including steroids, fatty acids, and xenobiotics. This Cavia porcellus (Guinea pig) protein is Cytochrome P450 3A15 (CYP3A15).